The sequence spans 219 residues: Adenylate kinase (219 aa).

10 to 15 (GAGKGT) is a binding site for ATP. Residues 30–59 (STGDMLRVAVKVGTPLGIEAKKIMDSGGLV) are NMP. AMP-binding positions include Thr-31, Arg-36, 57–59 (GLV), 85–88 (GFPR), and Gln-92. Residues 122-159 (GRRTHLKSGRTYHITYNQPKVEGIDDITGEKLVQRSDD) form an LID region. ATP is bound by residues Arg-123 and 132–133 (TY). AMP contacts are provided by Arg-156 and Arg-167. Gly-202 contacts ATP.

The protein belongs to the adenylate kinase family. In terms of assembly, monomer.

Its subcellular location is the cytoplasm. The enzyme catalyses AMP + ATP = 2 ADP. It functions in the pathway purine metabolism; AMP biosynthesis via salvage pathway; AMP from ADP: step 1/1. Catalyzes the reversible transfer of the terminal phosphate group between ATP and AMP. Plays an important role in cellular energy homeostasis and in adenine nucleotide metabolism. The sequence is that of Adenylate kinase from Vesicomyosocius okutanii subsp. Calyptogena okutanii (strain HA).